The sequence spans 421 residues: MDSISLLPDDFLLRILSLLPTKDVLNTSVLSKRWRYLWKLVPKLQYSLIDKNADHGTFVRFVDRSLLLSMAPVLESLHLKLGRQCSEVDIGFWVRIAVEKGLCELDFDYEHYKTEPCRLPQSLFTCGTLTVLKLKNVSLKDVQFPVCFKLLKTLHLEYVIFLDKETPQKLLSSCPILEVFDLTRDDDDVDNVMSFSVMVPSLQRFIYCGGSGAELVMNTPSLKYLKLSGCGYECMIGNLPEIVEAHVEVACSTDDILTSLASVKRLLLCLPTEPELPTGTIFHQLEHLEFCSCCTEWDILMFMLKHSPKLRSLKLNETHGYTIVSQSDPMFHWEEPSSVPETLMFVLETLEWRNYRGLKMENELASFLLKHSRRLKIATFSPADCKQVRIELRTTVGMKYRILMELARLPRGSAECELVFG.

Residues 1–52 (MDSISLLPDDFLLRILSLLPTKDVLNTSVLSKRWRYLWKLVPKLQYSLIDKN) enclose the F-box domain. The FBD domain maps to 332–382 (HWEEPSSVPETLMFVLETLEWRNYRGLKMENELASFLLKHSRRLKIATFSP).

This Arabidopsis thaliana (Mouse-ear cress) protein is FBD-associated F-box protein At5g56370.